A 281-amino-acid chain; its full sequence is Elongation factor 1-delta (281 aa).

Position 2 is an N-acetylalanine (A2). K17 carries the post-translational modification N6-acetyllysine. 4 positions are modified to phosphoserine: S37, E40, S44, and S60. Residue T73 is modified to Phosphothreonine. The tract at residues L80–L115 is leucine-zipper. S86, N91, L94, and S106 each carry phosphoserine. At K107 the chain carries N6-acetyllysine. K117 carries the N6-acetyllysine; alternate modification. Residue K117 is modified to N6-succinyllysine; alternate. A disordered region spans residues S118–A172. At S119 the chain carries Phosphoserine. Residue T129 is modified to Phosphothreonine. The residue at position 133 (S133) is a Phosphoserine. T147 bears the Phosphothreonine mark. Positions A149–K169 are enriched in acidic residues. The residue at position 162 (S162) is a Phosphoserine; by CK2. The segment at Q173 to I281 is catalytic (GEF).

The protein belongs to the EF-1-beta/EF-1-delta family. As to quaternary structure, EF-1 is composed of 4 subunits: alpha, beta, delta isoform 1, and gamma. Isoform 2 interacts with HSF1 and NFE2L2. Isoform 2 is specifically expressed in brain, cerebellum and testis.

Its subcellular location is the nucleus. EF-1-beta and EF-1-delta stimulate the exchange of GDP bound to EF-1-alpha to GTP, regenerating EF-1-alpha for another round of transfer of aminoacyl-tRNAs to the ribosome. Functionally, regulates induction of heat-shock-responsive genes through association with heat shock transcription factors and direct DNA-binding at heat shock promoter elements (HSE). The polypeptide is Elongation factor 1-delta (EEF1D) (Homo sapiens (Human)).